A 731-amino-acid polypeptide reads, in one-letter code: Inclusion body clearance protein IML2 (731 aa).

Residues 1-26 (MFRVFGSFGSKGNQSSGEEQSTKTKQ) form a disordered region. Over residues 10 to 26 (SKGNQSSGEEQSTKTKQ) the composition is skewed to polar residues. Residues S265, S268, and S378 each carry the phosphoserine modification. T380 carries the phosphothreonine modification. A phosphoserine mark is found at S383 and S392.

It belongs to the IML2 family. Interacts with lipid droplet proteins PET10 and PDR16.

It localises to the cytoplasm. The protein resides in the nucleus. In terms of biological role, inclusion body (IB) resident protein that interacts strongly with lipid droplet (LD) proteins. Involved in LD-mediated IB clearing after protein folding stress, probably by enabling access to the IBs of an LD-stored soluble sterol derivative that acts as a chaperone in inclusion clearing. The chain is Inclusion body clearance protein IML2 from Saccharomyces cerevisiae (strain ATCC 204508 / S288c) (Baker's yeast).